A 756-amino-acid polypeptide reads, in one-letter code: Catalase-peroxidase (756 aa).

The tryptophyl-tyrosyl-methioninium (Trp-Tyr) (with M-270) cross-link spans 91 to 244 (WHSAGTYRTG…LAAVQMGLIY (154 aa)). The active-site Proton acceptor is the His-92. Residues 198–230 (AQKKMQQPGDGTLVAEPENHANEESRTASGERN) are disordered. The span at 214–223 (PENHANEESR) shows a compositional bias: basic and acidic residues. Residues 244-270 (YVNPEGPEGVPDPVASARDIRETFGRM) constitute a cross-link (tryptophyl-tyrosyl-methioninium (Tyr-Met) (with W-91)). His-285 serves as a coordination point for heme b. Residues 371–390 (KNGAGAGKIPDAHDPSKRHA) form a disordered region.

It belongs to the peroxidase family. Peroxidase/catalase subfamily. Homodimer or homotetramer. Requires heme b as cofactor. Post-translationally, formation of the three residue Trp-Tyr-Met cross-link is important for the catalase, but not the peroxidase activity of the enzyme.

The enzyme catalyses H2O2 + AH2 = A + 2 H2O. The catalysed reaction is 2 H2O2 = O2 + 2 H2O. Its function is as follows. Bifunctional enzyme with both catalase and broad-spectrum peroxidase activity. The chain is Catalase-peroxidase from Pseudomonas syringae pv. tomato (strain ATCC BAA-871 / DC3000).